A 622-amino-acid polypeptide reads, in one-letter code: 1-deoxy-D-xylulose-5-phosphate synthase (622 aa).

Thiamine diphosphate is bound by residues His80 and 121–123 (GHS). Asp152 is a binding site for Mg(2+). Thiamine diphosphate is bound by residues 153–154 (GA), Asn181, Tyr288, and Glu370. Asn181 lines the Mg(2+) pocket.

The protein belongs to the transketolase family. DXPS subfamily. In terms of assembly, homodimer. Mg(2+) serves as cofactor. Thiamine diphosphate is required as a cofactor.

It carries out the reaction D-glyceraldehyde 3-phosphate + pyruvate + H(+) = 1-deoxy-D-xylulose 5-phosphate + CO2. It functions in the pathway metabolic intermediate biosynthesis; 1-deoxy-D-xylulose 5-phosphate biosynthesis; 1-deoxy-D-xylulose 5-phosphate from D-glyceraldehyde 3-phosphate and pyruvate: step 1/1. Catalyzes the acyloin condensation reaction between C atoms 2 and 3 of pyruvate and glyceraldehyde 3-phosphate to yield 1-deoxy-D-xylulose-5-phosphate (DXP). The protein is 1-deoxy-D-xylulose-5-phosphate synthase of Shewanella baltica (strain OS155 / ATCC BAA-1091).